The primary structure comprises 764 residues: Calpain-like protease palB/RIM13 (764 aa).

One can recognise a Calpain catalytic domain in the interval 95–368; it reads GEFYPPLTVY…FKYFYINWNP (274 aa). Residues cysteine 165, histidine 318, and asparagine 336 contribute to the active site.

Belongs to the peptidase C2 family. PalB/RIM13 subfamily.

Functionally, required for the proteolytic cleavage of the transcription factor RIM101 in response to alkaline ambient pH. In Debaryomyces hansenii (strain ATCC 36239 / CBS 767 / BCRC 21394 / JCM 1990 / NBRC 0083 / IGC 2968) (Yeast), this protein is Calpain-like protease palB/RIM13.